The primary structure comprises 267 residues: Putative carbamate hydrolase RutD (267 aa).

The AB hydrolase-1 domain occupies P14–P115.

The protein belongs to the AB hydrolase superfamily. Hydrolase RutD family.

It catalyses the reaction carbamate + 2 H(+) = NH4(+) + CO2. In terms of biological role, involved in pyrimidine catabolism. May facilitate the hydrolysis of carbamate, a reaction that can also occur spontaneously. In Serratia proteamaculans (strain 568), this protein is Putative carbamate hydrolase RutD.